The sequence spans 1019 residues: Sca1 complex protein phr (1019 aa).

Disordered stretches follow at residues Ile-89–Phe-118, Ala-131–Asn-202, Gln-265–Asn-287, and Ser-512–Leu-546. Residues Ser-93 to Ser-102 are compositionally biased toward low complexity. The span at Asn-141 to Asp-155 shows a compositional bias: basic and acidic residues. Residues Asn-158–Asn-188 adopt a coiled-coil conformation. Low complexity predominate over residues Asn-158–Asn-202. A PH domain is found at Glu-735–Phe-836. Positions Val-860–Gly-872 are enriched in low complexity. Disordered regions lie at residues Val-860–Ile-890, Asn-904–Leu-951, and Ser-977–Lys-1019. The segment covering Thr-879 to Ile-890 has biased composition (polar residues). Residues Ser-977–Ser-986 are compositionally biased toward low complexity. Residues Pro-987–Lys-1019 are compositionally biased toward polar residues.

As to quaternary structure, component of the Sca1 complex composed of at least gefA, gefH, scaA, phr, and the protein phosphatase 2A subunits pppA and pho2B. Interacts directly with gefH.

The protein resides in the cell membrane. Its function is as follows. Component of the Sca1 complex, a regulator of cell motility, chemotaxis and signal relay. The Sca1 complex is recruited to the plasma membrane in a chemoattractant- and F-actin-dependent manner and is enriched at the leading edge of chemotaxing cells where it regulates F-actin dynamics and signal relay by controlling the activation of rasC and the downstream target of rapamycin complex 2 (TORC2)-Akt/protein kinase B (PKB) pathway. In Dictyostelium discoideum (Social amoeba), this protein is Sca1 complex protein phr.